Consider the following 199-residue polypeptide: Probable nicotinate-nucleotide adenylyltransferase (199 aa).

The protein belongs to the NadD family.

It catalyses the reaction nicotinate beta-D-ribonucleotide + ATP + H(+) = deamido-NAD(+) + diphosphate. It participates in cofactor biosynthesis; NAD(+) biosynthesis; deamido-NAD(+) from nicotinate D-ribonucleotide: step 1/1. Catalyzes the reversible adenylation of nicotinate mononucleotide (NaMN) to nicotinic acid adenine dinucleotide (NaAD). The protein is Probable nicotinate-nucleotide adenylyltransferase of Leptospira interrogans serogroup Icterohaemorrhagiae serovar copenhageni (strain Fiocruz L1-130).